The sequence spans 1058 residues: Isoleucine--tRNA ligase (1058 aa).

Residues Pro48–Thr58 carry the 'HIGH' region motif. Residues Lys596–Ser600 carry the 'KMSKS' region motif. ATP is bound at residue Lys599.

This sequence belongs to the class-I aminoacyl-tRNA synthetase family. IleS type 2 subfamily. As to quaternary structure, monomer. Zn(2+) serves as cofactor.

The protein localises to the cytoplasm. The enzyme catalyses tRNA(Ile) + L-isoleucine + ATP = L-isoleucyl-tRNA(Ile) + AMP + diphosphate. In terms of biological role, catalyzes the attachment of isoleucine to tRNA(Ile). As IleRS can inadvertently accommodate and process structurally similar amino acids such as valine, to avoid such errors it has two additional distinct tRNA(Ile)-dependent editing activities. One activity is designated as 'pretransfer' editing and involves the hydrolysis of activated Val-AMP. The other activity is designated 'posttransfer' editing and involves deacylation of mischarged Val-tRNA(Ile). This is Isoleucine--tRNA ligase from Methanosarcina barkeri (strain Fusaro / DSM 804).